We begin with the raw amino-acid sequence, 284 residues long: Pantothenate synthetase (284 aa).

30-37 lines the ATP pocket; the sequence is MGNLHEGH. His37 functions as the Proton donor in the catalytic mechanism. Position 61 (Gln61) interacts with (R)-pantoate. Gln61 contacts beta-alanine. 149-152 is a binding site for ATP; it reads GEKD. A (R)-pantoate-binding site is contributed by Gln155. ATP-binding positions include Val178 and 186–189; that span reads LSSR.

The protein belongs to the pantothenate synthetase family. As to quaternary structure, homodimer.

The protein resides in the cytoplasm. The catalysed reaction is (R)-pantoate + beta-alanine + ATP = (R)-pantothenate + AMP + diphosphate + H(+). The protein operates within cofactor biosynthesis; (R)-pantothenate biosynthesis; (R)-pantothenate from (R)-pantoate and beta-alanine: step 1/1. Catalyzes the condensation of pantoate with beta-alanine in an ATP-dependent reaction via a pantoyl-adenylate intermediate. The sequence is that of Pantothenate synthetase from Yersinia pseudotuberculosis serotype O:1b (strain IP 31758).